An 80-amino-acid polypeptide reads, in one-letter code: Exodeoxyribonuclease 7 small subunit (80 aa).

Belongs to the XseB family. Heterooligomer composed of large and small subunits.

Its subcellular location is the cytoplasm. It carries out the reaction Exonucleolytic cleavage in either 5'- to 3'- or 3'- to 5'-direction to yield nucleoside 5'-phosphates.. In terms of biological role, bidirectionally degrades single-stranded DNA into large acid-insoluble oligonucleotides, which are then degraded further into small acid-soluble oligonucleotides. In Rickettsia akari (strain Hartford), this protein is Exodeoxyribonuclease 7 small subunit.